The chain runs to 137 residues: uncharacterized protein (137 aa).

One can recognise a Sm domain in the interval 30 to 105 (SLLCVFTALR…IRFIQIPDKI (76 aa)).

This is an uncharacterized protein from Dictyostelium discoideum (Social amoeba).